The chain runs to 119 residues: Phosphoribosyl-AMP cyclohydrolase (119 aa).

Aspartate 77 serves as a coordination point for Mg(2+). Residue cysteine 78 coordinates Zn(2+). Residues aspartate 79 and aspartate 81 each coordinate Mg(2+). Residues cysteine 94 and cysteine 101 each contribute to the Zn(2+) site.

It belongs to the PRA-CH family. Homodimer. Requires Mg(2+) as cofactor. Zn(2+) serves as cofactor.

It localises to the cytoplasm. The catalysed reaction is 1-(5-phospho-beta-D-ribosyl)-5'-AMP + H2O = 1-(5-phospho-beta-D-ribosyl)-5-[(5-phospho-beta-D-ribosylamino)methylideneamino]imidazole-4-carboxamide. Its pathway is amino-acid biosynthesis; L-histidine biosynthesis; L-histidine from 5-phospho-alpha-D-ribose 1-diphosphate: step 3/9. Catalyzes the hydrolysis of the adenine ring of phosphoribosyl-AMP. The sequence is that of Phosphoribosyl-AMP cyclohydrolase from Cereibacter sphaeroides (strain ATCC 17025 / ATH 2.4.3) (Rhodobacter sphaeroides).